The chain runs to 188 residues: Mitochondrial import receptor subunit TOM20-1 (188 aa).

Residues 1 to 164 lie on the Cytoplasmic side of the membrane; it reads MDKLNFFEEI…VVKNKKSSDE (164 aa). A helical transmembrane segment spans residues 165-182; that stretch reads KYIVMGWVILAIGVVACI. The Mitochondrial intermembrane segment spans residues 183–188; sequence SFRKLR.

The protein belongs to the Tom20 family. In terms of assembly, forms part of the preprotein translocase complex of the outer mitochondrial membrane (TOM complex) which consists of at least 6 different proteins (TOM5, TOM6, TOM7, TOM20, TOM22/TOM9 and TOM40). Component of a mitochondrial large protein complex that contains, at least, MIC60, DGS1, TOM40, TOM20 proteins, and petC/RISP. As to expression, barely detected in roots.

Its subcellular location is the mitochondrion outer membrane. Its function is as follows. Central component of the receptor complex responsible for the recognition and translocation of cytosolically synthesized mitochondrial preproteins. Together with TOM22 functions as the transit peptide receptor at the surface of the mitochondrion outer membrane and facilitates the movement of preproteins into the translocation pore. The protein is Mitochondrial import receptor subunit TOM20-1 of Arabidopsis thaliana (Mouse-ear cress).